The chain runs to 83 residues: METILGFTAIAVALLIGMGALGTAIGFGLLGGKFLEGAARQPEMAPMLQVKMFIVAGLLDAVTMIGVGIALYMLFTNPLGAML.

2 helical membrane-spanning segments follow: residues 10 to 30 (IAVA…FGLL) and 52 to 72 (MFIV…IALY).

It belongs to the ATPase C chain family. In terms of assembly, F-type ATPases have 2 components, F(1) - the catalytic core - and F(0) - the membrane proton channel. F(1) has five subunits: alpha(3), beta(3), gamma(1), delta(1), epsilon(1). F(0) has three main subunits: a(1), b(2) and c(10-14). The alpha and beta chains form an alternating ring which encloses part of the gamma chain. F(1) is attached to F(0) by a central stalk formed by the gamma and epsilon chains, while a peripheral stalk is formed by the delta and b chains.

It localises to the cell inner membrane. Its function is as follows. F(1)F(0) ATP synthase produces ATP from ADP in the presence of a proton or sodium gradient. F-type ATPases consist of two structural domains, F(1) containing the extramembraneous catalytic core and F(0) containing the membrane proton channel, linked together by a central stalk and a peripheral stalk. During catalysis, ATP synthesis in the catalytic domain of F(1) is coupled via a rotary mechanism of the central stalk subunits to proton translocation. In terms of biological role, key component of the F(0) channel; it plays a direct role in translocation across the membrane. A homomeric c-ring of between 10-14 subunits forms the central stalk rotor element with the F(1) delta and epsilon subunits. The polypeptide is ATP synthase subunit c (Shewanella amazonensis (strain ATCC BAA-1098 / SB2B)).